Consider the following 619-residue polypeptide: Dihydroxy-acid dehydratase (619 aa).

Residue Asp81 coordinates Mg(2+). Cys122 is a [2Fe-2S] cluster binding site. Asp123 and Lys124 together coordinate Mg(2+). N6-carboxylysine is present on Lys124. Cys201 lines the [2Fe-2S] cluster pocket. Position 496 (Glu496) interacts with Mg(2+). Ser522 serves as the catalytic Proton acceptor.

It belongs to the IlvD/Edd family. In terms of assembly, homodimer. The cofactor is [2Fe-2S] cluster. Mg(2+) serves as cofactor.

It carries out the reaction (2R)-2,3-dihydroxy-3-methylbutanoate = 3-methyl-2-oxobutanoate + H2O. The enzyme catalyses (2R,3R)-2,3-dihydroxy-3-methylpentanoate = (S)-3-methyl-2-oxopentanoate + H2O. Its pathway is amino-acid biosynthesis; L-isoleucine biosynthesis; L-isoleucine from 2-oxobutanoate: step 3/4. It functions in the pathway amino-acid biosynthesis; L-valine biosynthesis; L-valine from pyruvate: step 3/4. Functionally, functions in the biosynthesis of branched-chain amino acids. Catalyzes the dehydration of (2R,3R)-2,3-dihydroxy-3-methylpentanoate (2,3-dihydroxy-3-methylvalerate) into 2-oxo-3-methylpentanoate (2-oxo-3-methylvalerate) and of (2R)-2,3-dihydroxy-3-methylbutanoate (2,3-dihydroxyisovalerate) into 2-oxo-3-methylbutanoate (2-oxoisovalerate), the penultimate precursor to L-isoleucine and L-valine, respectively. The sequence is that of Dihydroxy-acid dehydratase from Burkholderia vietnamiensis (strain G4 / LMG 22486) (Burkholderia cepacia (strain R1808)).